Consider the following 441-residue polypeptide: pH-response regulator protein palC (441 aa).

The BRO1 domain occupies 3-352; it reads ISYTGQLPTT…GAAYAAILQL (350 aa). Disordered regions lie at residues 278-304 and 414-441; these read RKDD…TSSG and KWTP…GSYY.

The protein belongs to the palC family.

In terms of biological role, required for the proteolytic cleavage of the transcription factor RIM101 in response to alkaline ambient pH. In Yarrowia lipolytica (strain CLIB 122 / E 150) (Yeast), this protein is pH-response regulator protein palC.